The sequence spans 597 residues: uncharacterized protein (597 aa).

The VWFA domain occupies 378-575 (EVSFVVDNSG…YLPRELLRTL (198 aa)).

This is an uncharacterized protein from Treponema pallidum (strain Nichols).